The sequence spans 76 residues: Lividin-2 (76 aa).

Residues 1-22 form the signal peptide; sequence MFTLKKSLLLLFFLGTISLSLC. A propeptide spanning residues 23–41 is cleaved from the precursor; it reads QEERNADEEDGGEVTEEEV. Cys70 and Cys76 are joined by a disulfide.

As to expression, expressed by the skin glands.

The protein resides in the secreted. Antimicrobial peptide. This chain is Lividin-2, found in Odorrana livida (Green mountain frog).